The sequence spans 129 residues: Antileukoproteinase (129 aa).

The N-terminal stretch at 1–22 is a signal peptide; the sequence is GRGLLPFVLLALGIXAPWAVEG. WAP domains are found at residues 25 to 73 and 79 to 127; these read NALK…LNPV and VKVK…LTPV. Disulfide bonds link cysteine 32/cysteine 61, cysteine 40/cysteine 65, cysteine 48/cysteine 60, cysteine 54/cysteine 69, cysteine 86/cysteine 115, cysteine 93/cysteine 119, cysteine 102/cysteine 114, and cysteine 108/cysteine 123. Residues 81 to 129 are elastase inhibitory domain; sequence VKPGKCPVVYGQCMMLNPPNHCKTDSQCLGDLKCCKSMCGKVCLTPVKA.

Interacts with GRN; interaction protects progranulin from proteolysis. In terms of tissue distribution, found in pregnant endometrium and myometrium, placenta, allantoic fluids, fetal cord blood, and fetal liver. Also found in uterus and lung.

The protein localises to the secreted. In terms of biological role, acid-stable proteinase inhibitor with strong affinities for trypsin, chymotrypsin, elastase, and cathepsin G. Modulates the inflammatory and immune responses after bacterial infection, and after infection by the intracellular parasite L.major. Down-regulates responses to bacterial lipopolysaccharide (LPS). Plays a role in regulating the activation of NF-kappa-B and inflammatory responses. Has antimicrobial activity against mycobacteria, but not against salmonella. Contributes to normal resistance against infection by M.tuberculosis. Required for normal resistance to infection by L.major. Required for normal wound healing, probably by preventing tissue damage by limiting protease activity. Together with ELANE, required for normal differentiation and proliferation of bone marrow myeloid cells. The sequence is that of Antileukoproteinase (SLPI) from Sus scrofa (Pig).